The sequence spans 190 residues: Threonylcarbamoyl-AMP synthase (190 aa).

A YrdC-like domain is found at 7–190 (SEAVAHAVAV…ALTGELFRQG (184 aa)).

It belongs to the SUA5 family. TsaC subfamily.

It localises to the cytoplasm. The enzyme catalyses L-threonine + hydrogencarbonate + ATP = L-threonylcarbamoyladenylate + diphosphate + H2O. In terms of biological role, required for the formation of a threonylcarbamoyl group on adenosine at position 37 (t(6)A37) in tRNAs that read codons beginning with adenine. Catalyzes the conversion of L-threonine, HCO(3)(-)/CO(2) and ATP to give threonylcarbamoyl-AMP (TC-AMP) as the acyladenylate intermediate, with the release of diphosphate. This Klebsiella pneumoniae subsp. pneumoniae (strain ATCC 700721 / MGH 78578) protein is Threonylcarbamoyl-AMP synthase.